Reading from the N-terminus, the 20-residue chain is Zinc metalloproteinase-disintegrin-like uracoina-1 (20 aa).

This sequence belongs to the venom metalloproteinase (M12B) family. P-III subfamily. In terms of assembly, monomer. Zn(2+) is required as a cofactor. In terms of tissue distribution, expressed by the venom gland.

The protein localises to the secreted. Inhibited by ethylenediaminetetraacetic acid (EDTA) and 1,10-phenanthroline. Not inhibited by tosyl-L-lysine chloromethyl ketone (TCLK) and phenylmethanesulfonylfluoride (PMSF). Snake venom zinc metalloprotease that possesses hemorrhagic activity (minimum hemorrhagic dose, MHD=4.7 ug) when injected intradermally into mice. Degrades the alpha-chain of fibrinogen (FGA). This is Zinc metalloproteinase-disintegrin-like uracoina-1 from Crotalus vegrandis (Uracoan rattlesnake).